Consider the following 527-residue polypeptide: Peptide chain release factor 3 (527 aa).

Residues 9–277 (AKRRTFAIIS…AVVDWAPRPL (269 aa)) enclose the tr-type G domain. GTP-binding positions include 18–25 (SHPDAGKT), 86–90 (DTPGH), and 140–143 (NKLD).

Belongs to the TRAFAC class translation factor GTPase superfamily. Classic translation factor GTPase family. PrfC subfamily.

The protein resides in the cytoplasm. In terms of biological role, increases the formation of ribosomal termination complexes and stimulates activities of RF-1 and RF-2. It binds guanine nucleotides and has strong preference for UGA stop codons. It may interact directly with the ribosome. The stimulation of RF-1 and RF-2 is significantly reduced by GTP and GDP, but not by GMP. The polypeptide is Peptide chain release factor 3 (Pseudomonas putida (strain ATCC 47054 / DSM 6125 / CFBP 8728 / NCIMB 11950 / KT2440)).